Reading from the N-terminus, the 275-residue chain is TATA-box-binding protein (275 aa).

Disordered regions lie at residues 23 to 45 and 73 to 92; these read EDESIQTQQQQQTPRHPASFGMN and GSMSIYGPGTPAPATPHTPA. 2 consecutive repeat copies span residues 103–179 and 193–270.

It belongs to the TBP family. As to quaternary structure, belongs to the TFIID complex together with the TBP-associated factors (TAFs). Binds DNA as monomer.

The protein localises to the nucleus. General transcription factor that functions at the core of the DNA-binding multiprotein factor TFIID. Binding of TFIID to the TATA box is the initial transcriptional step of the pre-initiation complex (PIC), playing a role in the activation of eukaryotic genes transcribed by RNA polymerase II. The sequence is that of TATA-box-binding protein from Artemia franciscana (Brine shrimp).